We begin with the raw amino-acid sequence, 242 residues long: tRNA (guanine-N(1)-)-methyltransferase (242 aa).

S-adenosyl-L-methionine is bound by residues Gly111 and 130–135 (IGDYVL).

This sequence belongs to the RNA methyltransferase TrmD family. In terms of assembly, homodimer.

The protein resides in the cytoplasm. The catalysed reaction is guanosine(37) in tRNA + S-adenosyl-L-methionine = N(1)-methylguanosine(37) in tRNA + S-adenosyl-L-homocysteine + H(+). In terms of biological role, specifically methylates guanosine-37 in various tRNAs. This chain is tRNA (guanine-N(1)-)-methyltransferase, found in Aster yellows witches'-broom phytoplasma (strain AYWB).